A 458-amino-acid chain; its full sequence is ATP synthase subunit beta (458 aa).

148-155 contacts ATP; sequence GGAGVGKT.

It belongs to the ATPase alpha/beta chains family. As to quaternary structure, F-type ATPases have 2 components, CF(1) - the catalytic core - and CF(0) - the membrane proton channel. CF(1) has five subunits: alpha(3), beta(3), gamma(1), delta(1), epsilon(1). CF(0) has three main subunits: a(1), b(2) and c(9-12). The alpha and beta chains form an alternating ring which encloses part of the gamma chain. CF(1) is attached to CF(0) by a central stalk formed by the gamma and epsilon chains, while a peripheral stalk is formed by the delta and b chains.

It localises to the cell inner membrane. The catalysed reaction is ATP + H2O + 4 H(+)(in) = ADP + phosphate + 5 H(+)(out). Its function is as follows. Produces ATP from ADP in the presence of a proton gradient across the membrane. The catalytic sites are hosted primarily by the beta subunits. The sequence is that of ATP synthase subunit beta from Pseudomonas fluorescens (strain ATCC BAA-477 / NRRL B-23932 / Pf-5).